A 412-amino-acid chain; its full sequence is Cellobiose 2-epimerase (412 aa).

This sequence belongs to the cellobiose 2-epimerase family.

The enzyme catalyses D-cellobiose = beta-D-glucosyl-(1-&gt;4)-D-mannopyranose. Catalyzes the reversible epimerization of cellobiose to 4-O-beta-D-glucopyranosyl-D-mannose (Glc-Man). Can also use lactose, epilactose, mannobiose and cellotriose. Highly specific for oligosaccharides linked by the beta-1,4-glycosidic linkage. Shows preference for lactose. In Rhodothermus marinus (Rhodothermus obamensis), this protein is Cellobiose 2-epimerase (ce).